Consider the following 103-residue polypeptide: Nucleoid-associated protein Anae109_3761 (103 aa).

Belongs to the YbaB/EbfC family. As to quaternary structure, homodimer.

The protein resides in the cytoplasm. It is found in the nucleoid. Its function is as follows. Binds to DNA and alters its conformation. May be involved in regulation of gene expression, nucleoid organization and DNA protection. The chain is Nucleoid-associated protein Anae109_3761 from Anaeromyxobacter sp. (strain Fw109-5).